The sequence spans 228 residues: Phosphoribosylformylglycinamidine synthase subunit PurQ (228 aa).

The Glutamine amidotransferase type-1 domain occupies 3 to 226 (FAVVVFPGSN…VTYWRDAHVV (224 aa)). Residue cysteine 86 is the Nucleophile of the active site. Catalysis depends on residues histidine 195 and glutamate 197.

Part of the FGAM synthase complex composed of 1 PurL, 1 PurQ and 2 PurS subunits.

The protein resides in the cytoplasm. The enzyme catalyses N(2)-formyl-N(1)-(5-phospho-beta-D-ribosyl)glycinamide + L-glutamine + ATP + H2O = 2-formamido-N(1)-(5-O-phospho-beta-D-ribosyl)acetamidine + L-glutamate + ADP + phosphate + H(+). It catalyses the reaction L-glutamine + H2O = L-glutamate + NH4(+). It participates in purine metabolism; IMP biosynthesis via de novo pathway; 5-amino-1-(5-phospho-D-ribosyl)imidazole from N(2)-formyl-N(1)-(5-phospho-D-ribosyl)glycinamide: step 1/2. Functionally, part of the phosphoribosylformylglycinamidine synthase complex involved in the purines biosynthetic pathway. Catalyzes the ATP-dependent conversion of formylglycinamide ribonucleotide (FGAR) and glutamine to yield formylglycinamidine ribonucleotide (FGAM) and glutamate. The FGAM synthase complex is composed of three subunits. PurQ produces an ammonia molecule by converting glutamine to glutamate. PurL transfers the ammonia molecule to FGAR to form FGAM in an ATP-dependent manner. PurS interacts with PurQ and PurL and is thought to assist in the transfer of the ammonia molecule from PurQ to PurL. The chain is Phosphoribosylformylglycinamidine synthase subunit PurQ from Anoxybacillus flavithermus (strain DSM 21510 / WK1).